Here is a 426-residue protein sequence, read N- to C-terminus: Tachykinins (426 aa).

The propeptide occupies 1–116 (MQCDFRVHQD…IEDNLSHEFE (116 aa)). Arginine amide is present on R127. A propeptide spanning residues 131 to 145 (GYLTPDFEDSYFRDE) is cleaved from the precursor. Residue R156 is modified to Arginine amide. Positions 160–167 (VVSDDDYY) are excised as a propeptide. R178 is modified (arginine amide). Positions 182-235 (SLEEVLGEIEKKAAMDYYDTRDKKTYVFEYPEDYEKRLLASIRGKLKEFPMEWE) are excised as a propeptide. Arginine amide is present on R246. Positions 250–259 (SLLDEIEELE) are excised as a propeptide. The residue at position 270 (R270) is an Arginine amide. Positions 274–291 (NALENYIDYYLDPDMDFD) are excised as a propeptide. Residues 299-329 (QGMRGKKDSDKRAPMGFQGMRGKRNTGQRFD) form a disordered region. Arginine amide is present on R302. The propeptide occupies 306-308 (DSD). An Arginine amide modification is found at R319. The propeptide occupies 323–358 (NTGQRFDTGINFNIRSSNEYQGTNNRRNALASCQLE). Residues R369 and R386 each carry the arginine amide modification. Positions 390 to 426 (WATAPYEDDSPFISVFDNTERIGVDGDSPAILGNSIS) are excised as a propeptide.

This sequence belongs to the tachykinin family. In terms of tissue distribution, tachykinins (TK) are expressed throughout the nervous system. APMGFQGMR-amide is also expressed in the retrocerebral complex (at protein level).

The protein localises to the secreted. In terms of biological role, tachykinins are active peptides which excite neurons, evoke behavioral responses, are potent vasodilators and secretagogues, and contract (directly or indirectly) many smooth muscles. This is Tachykinins from Camponotus floridanus (Florida carpenter ant).